Reading from the N-terminus, the 155-residue chain is Interleukin-2 (155 aa).

The N-terminal stretch at Met1 to Gly20 is a signal peptide. O-linked (GalNAc...) threonine glycosylation occurs at Thr23. Cysteines 79 and 127 form a disulfide.

The protein belongs to the IL-2 family.

The protein resides in the secreted. Cytokine produced by activated CD4-positive helper T-cells and to a lesser extend activated CD8-positive T-cells and natural killer (NK) cells that plays pivotal roles in the immune response and tolerance. Binds to a receptor complex composed of either the high-affinity trimeric IL-2R (IL2RA/CD25, IL2RB/CD122 and IL2RG/CD132) or the low-affinity dimeric IL-2R (IL2RB and IL2RG). Interaction with the receptor leads to oligomerization and conformation changes in the IL-2R subunits resulting in downstream signaling starting with phosphorylation of JAK1 and JAK3. In turn, JAK1 and JAK3 phosphorylate the receptor to form a docking site leading to the phosphorylation of several substrates including STAT5. This process leads to activation of several pathways including STAT, phosphoinositide-3-kinase/PI3K and mitogen-activated protein kinase/MAPK pathways. Functions as a T-cell growth factor and can increase NK-cell cytolytic activity as well. Promotes strong proliferation of activated B-cells and subsequently immunoglobulin production. Plays a pivotal role in regulating the adaptive immune system by controlling the survival and proliferation of regulatory T-cells, which are required for the maintenance of immune tolerance. Moreover, participates in the differentiation and homeostasis of effector T-cell subsets, including Th1, Th2, Th17 as well as memory CD8-positive T-cells. This chain is Interleukin-2 (IL2), found in Ovis aries (Sheep).